A 327-amino-acid chain; its full sequence is Phenylalanine--tRNA ligase alpha subunit (327 aa).

Glutamate 252 contacts Mg(2+).

The protein belongs to the class-II aminoacyl-tRNA synthetase family. Phe-tRNA synthetase alpha subunit type 1 subfamily. Tetramer of two alpha and two beta subunits. Mg(2+) is required as a cofactor.

It is found in the cytoplasm. It carries out the reaction tRNA(Phe) + L-phenylalanine + ATP = L-phenylalanyl-tRNA(Phe) + AMP + diphosphate + H(+). In Pectobacterium atrosepticum (strain SCRI 1043 / ATCC BAA-672) (Erwinia carotovora subsp. atroseptica), this protein is Phenylalanine--tRNA ligase alpha subunit.